The chain runs to 76 residues: Toxin Acra III-1 (76 aa).

In terms of domain architecture, LCN-type CS-alpha/beta spans 4 to 67 (PGNYPLDTRG…IWDAVKNHCT (64 aa)). 3 disulfides stabilise this stretch: Cys-18–Cys-41, Cys-27–Cys-46, and Cys-31–Cys-48.

Belongs to the long (3 C-C) scorpion toxin superfamily. Sodium channel inhibitor family. Beta subfamily. As to expression, expressed by the venom gland.

It is found in the secreted. In terms of biological role, binds to sodium channels (Nav) and affects the channel activation process. In Androctonus crassicauda (Arabian fat-tailed scorpion), this protein is Toxin Acra III-1.